A 435-amino-acid chain; its full sequence is MSTGFFGDITKIKYEGPDSTNPLAFRHYNPDEVVMGKRMEDHLRFAVAYWHTFVWPGTDPFGGNTFERPWFKDSMEAAKLKADVAFEFFQLLGTPYYCFHDADARPEGASFAENTKNLNEIVDYFAQKQADTGVKLLWGTANMFSHRRYMSGAATNPDPDVFAFAAATVKTCLDATQKLGGENYVLWGGREGYETLLNTDLKQELDHMGRFLNMVVEYKHKIGFKGAILIEPKPQEPSKHQYDYDVATVYGFLKTYGLEKEVKVNIEQGHAILAGHTFEHELALANALGIFGSIDMNRNDYQSGWDTDQFPNNVPEMALAYYQVLQAGGFTSGGTNFDSKLRRQSIDPADLLIGHIGGMDCCARGLKAAAKMVEDKALSGPLANRYAGWNSDGAKAMLASGTLESIAARVEGENINPQPVSGQQELLENVVNRYV.

Mg(2+)-binding residues include aspartate 306 and aspartate 308.

This sequence belongs to the xylose isomerase family. Homotetramer. Mg(2+) serves as cofactor.

The protein localises to the cytoplasm. It carries out the reaction alpha-D-xylose = alpha-D-xylulofuranose. In Allorhizobium ampelinum (strain ATCC BAA-846 / DSM 112012 / S4) (Agrobacterium vitis (strain S4)), this protein is Xylose isomerase.